Consider the following 736-residue polypeptide: Dimethylamine dehydrogenase (736 aa).

S-6-FMN cysteine is present on Cys31. Tyr176 to His179 contributes to the substrate binding site. Tyr181 serves as the catalytic Proton donor. Arg229 and Arg329 together coordinate FMN. 4 residues coordinate [4Fe-4S] cluster: Cys352, Cys355, Cys358, and Cys371. Asp398–Thr427 contacts ADP.

In the N-terminal section; belongs to the NADH:flavin oxidoreductase/NADH oxidase family. Requires FMN as cofactor. It depends on [4Fe-4S] cluster as a cofactor.

The enzyme catalyses dimethylamine + oxidized [electron-transfer flavoprotein] + H2O + H(+) = methylamine + reduced [electron-transfer flavoprotein] + formaldehyde. The polypeptide is Dimethylamine dehydrogenase (dmd) (Hyphomicrobium sp. (strain x)).